The sequence spans 893 residues: MSGLQLIWKSPTQLVLFVLLITISCIDLCHAVGAATPTKKSPPVRITKPQPVSSTTTAIPTTNEGSTTGEQLALLVSSTTEGTASSASSSSNGGSDDSSSTTAAGSLVPEICITGLQLSFTNADGEQVVRKQQELVQVIEGDVMLSVITSDPVSALFVINRVNQANLISADFEVGIRAINVDNASLAENLLIQEVQYLQQCTQYSMGIFIDFDLYKRLESIIRDLEYNVWPIPSARAHLFPKVAHLLHQMPWGEKIASVEIVTETLDIYNEFMDAARQEHMCLMHFKSDDNVYILFGNKMANHFKENGTVFAVPTERTEHIFLEELPNKSFILMENGIELRTADLDPMPTTLDEVLIGKSVLPSRILVFASPIVDLMNWLRGSLAKHCKRDEDLYMLESCFNFLNFIEDWRTPEYRRTHDTAELLSLLRMRKLSTSMLFQMYQKKQETVDVITGESRMELREIASQNFVTNVTTYYHYNRDNHTSLELKTKFGLVFNCQFTAGENRRYPFLFDGESVMFWRIKLDTWVATGLTAAILGLIATLAILVFIVVRISLGDVFEGNPVTSILLLLSLILVFCSFVPFSMEYVGEQRNSHVTFEDVHTLNTLCGVRVFIMTLVYCFVFSLLLCRAVMLASIGSEGGFLSHVNGYIQAIICVLSVFVQVGMSVQLLVVMHLASESVSCENIYYGRWLWGLLAYDFLLLCSLVSLVPFIYRSQRNYREGILIVIGAVLILIIWSVWIALSMFGDEWRDAAIPLGMQASGWAVLVGILIPRTFLIVRGIERSDIAQALPSLTSLAFAQNNQYSSEQSVYECVNPAMRHCSQEEMNHQSPSEIPTLPLRGGGPRRQQFFANLRQANANINPQRPPPHPQQSPSRSSVCSLPPSPDHSKITRF.

The signal sequence occupies residues 1–30 (MSGLQLIWKSPTQLVLFVLLITISCIDLCH). The Extracellular portion of the chain corresponds to 32-530 (VGAATPTKKS…RIKLDTWVAT (499 aa)). Disordered regions lie at residues 36 to 66 (TPTK…NEGS) and 82 to 102 (GTAS…SSTT). Polar residues predominate over residues 50–66 (QPVSSTTTAIPTTNEGS). N-linked (GlcNAc...) asparagine glycosylation is found at asparagine 183, asparagine 307, asparagine 328, asparagine 471, and asparagine 482. The next 8 membrane-spanning stretches (helical) occupy residues 531–551 (GLTA…FIVV), 563–583 (PVTS…FVPF), 607–627 (LCGV…SLLL), 630–650 (AVML…NGYI), 653–673 (IICV…LVVM), 692–712 (WGLL…VPFI), 722–742 (GILI…WIAL), and 752–772 (AAIP…ILIP). The Cytoplasmic segment spans residues 773–893 (RTFLIVRGIE…SPDHSKITRF (121 aa)). Residues 858–893 (ANINPQRPPPHPQQSPSRSSVCSLPPSPDHSKITRF) form a disordered region.

Belongs to the G-protein coupled receptor 3 family.

Its subcellular location is the cell membrane. Its function is as follows. Acts as a ligand for sevenless tyrosine-kinase receptor during eye development. This is Protein bride of sevenless (boss) from Drosophila virilis (Fruit fly).